The sequence spans 423 residues: 26S proteasome regulatory subunit 6B homolog (423 aa).

207–214 serves as a coordination point for ATP; it reads GPPGTGKT.

It belongs to the AAA ATPase family.

It is found in the cytoplasm. The protein resides in the nucleus. Functionally, the 26S proteasome is involved in the ATP-dependent degradation of ubiquitinated proteins. The regulatory (or ATPase) complex confers ATP dependency and substrate specificity to the 26S complex. In Aspergillus niger, this protein is 26S proteasome regulatory subunit 6B homolog (tbpA).